The primary structure comprises 596 residues: Cysteine--tRNA ligase (596 aa).

The tract at residues 1–199 (MKSKTFLEKN…SQRYFEELRK (199 aa)) is unknown. C212 lines the Zn(2+) pocket. The short motif at 214 to 224 (PTVYDEVHIGN) is the 'HIGH' region element. The Zn(2+) site is built by C377, H403, and E407. The 'KMSKS' region motif lies at 435-439 (KMSKS). Residue K438 coordinates ATP.

It belongs to the class-I aminoacyl-tRNA synthetase family. As to quaternary structure, monomer. Zn(2+) is required as a cofactor.

It localises to the cytoplasm. The catalysed reaction is tRNA(Cys) + L-cysteine + ATP = L-cysteinyl-tRNA(Cys) + AMP + diphosphate. The chain is Cysteine--tRNA ligase (cysS) from Mycoplasmopsis pulmonis (strain UAB CTIP) (Mycoplasma pulmonis).